We begin with the raw amino-acid sequence, 484 residues long: Ribosome biogenesis protein YTM1 (484 aa).

Residues valine 11–arginine 94 form a ubiquitin-like (UBL) domain region. WD repeat units lie at residues serine 121 to serine 160, glycine 166 to serine 204, glycine 215 to alanine 254, valine 289 to threonine 329, threonine 331 to serine 372, glycine 378 to glycine 418, and glycine 448 to serine 484.

The protein belongs to the WD repeat WDR12/YTM1 family. In terms of assembly, component of the NOP7 complex, composed of ERB1, NOP7 and YTM1. The complex is held together by ERB1, which interacts with NOP7 via its N-terminal domain and with YTM1 via a high-affinity interaction between the seven-bladed beta-propeller domains of the 2 proteins. The NOP7 complex associates with the 66S pre-ribosome. Interacts (via UBL domain) with MDN1 (via VWFA/MIDAS domain).

Its subcellular location is the nucleus. It is found in the nucleolus. It localises to the nucleoplasm. Component of the NOP7 complex, which is required for maturation of the 25S and 5.8S ribosomal RNAs and formation of the 60S ribosome. In Pyricularia oryzae (strain 70-15 / ATCC MYA-4617 / FGSC 8958) (Rice blast fungus), this protein is Ribosome biogenesis protein YTM1.